The primary structure comprises 138 residues: Large ribosomal subunit protein uL16 (138 aa).

The protein belongs to the universal ribosomal protein uL16 family. Part of the 50S ribosomal subunit.

Functionally, binds 23S rRNA and is also seen to make contacts with the A and possibly P site tRNAs. The sequence is that of Large ribosomal subunit protein uL16 from Syntrophobacter fumaroxidans (strain DSM 10017 / MPOB).